A 158-amino-acid polypeptide reads, in one-letter code: 6,7-dimethyl-8-ribityllumazine synthase (158 aa).

Residues Phe24, 58–60 (AFE), and 82–84 (AVI) contribute to the 5-amino-6-(D-ribitylamino)uracil site. (2S)-2-hydroxy-3-oxobutyl phosphate is bound at residue 87–88 (GT). His90 functions as the Proton donor in the catalytic mechanism. Phe115 is a 5-amino-6-(D-ribitylamino)uracil binding site. Residue Arg129 participates in (2S)-2-hydroxy-3-oxobutyl phosphate binding.

This sequence belongs to the DMRL synthase family. In terms of assembly, forms an icosahedral capsid composed of 60 subunits, arranged as a dodecamer of pentamers.

It catalyses the reaction (2S)-2-hydroxy-3-oxobutyl phosphate + 5-amino-6-(D-ribitylamino)uracil = 6,7-dimethyl-8-(1-D-ribityl)lumazine + phosphate + 2 H2O + H(+). Its pathway is cofactor biosynthesis; riboflavin biosynthesis; riboflavin from 2-hydroxy-3-oxobutyl phosphate and 5-amino-6-(D-ribitylamino)uracil: step 1/2. Catalyzes the formation of 6,7-dimethyl-8-ribityllumazine by condensation of 5-amino-6-(D-ribitylamino)uracil with 3,4-dihydroxy-2-butanone 4-phosphate. This is the penultimate step in the biosynthesis of riboflavin. The sequence is that of 6,7-dimethyl-8-ribityllumazine synthase from Ectopseudomonas mendocina (strain ymp) (Pseudomonas mendocina).